The following is a 428-amino-acid chain: MIIGIDDTDSNEGMCTTYLGALLLEELQEYGTVETLPLLVRLNPTIPYKTRGNAAIALKLKTDCPEKIIAHVTSRIEEFARMECEKTNPGAVFIQEKDYRSLKPILLSFLEKAVKDVIEIETAKHLISELGISSKSFKNGRGLIGALAACGAMLNPEKWDCTFEHLAYRQKKKWGSPRDVNKDSFFEADRQTYPGTWDTVDLANRLVVCVPHSADPVLFGIRGESPELVSKAASLIRSEPVERFAVYRTNQGTDMHLLPAASISEIRDMHSYRFEGTVSAVPKTIEGGHVIFAVRDGKGDEIDCAAFEPTKNFRVLARRLLLGDQIFLSGSVTSGTLNIEKMQVKELVLLYREENPKCPECGKHMKSAGQGQGFRCKKCGTRASSKIRCEAERDLEPGLYEVPPCARRHLAKPLARERDQNIRIHPSR.

It belongs to the TiaS family.

Its subcellular location is the cytoplasm. The catalysed reaction is cytidine(34) in tRNA(Ile2) + agmatine + ATP + H2O = 2-agmatinylcytidine(34) in tRNA(Ile2) + AMP + 2 phosphate + 2 H(+). In terms of biological role, ATP-dependent agmatine transferase that catalyzes the formation of 2-agmatinylcytidine (agm2C) at the wobble position (C34) of tRNA(Ile2), converting the codon specificity from AUG to AUA. The sequence is that of tRNA(Ile2) 2-agmatinylcytidine synthetase TiaS from Methanosarcina acetivorans (strain ATCC 35395 / DSM 2834 / JCM 12185 / C2A).